A 749-amino-acid polypeptide reads, in one-letter code: Patatin-like phospholipase domain-containing protein AN0408 (749 aa).

The span at 1-11 (MEKSAAGDNID) shows a compositional bias: basic and acidic residues. The tract at residues 1 to 21 (MEKSAAGDNIDKYSPSSIPDY) is disordered. The chain crosses the membrane as a helical span at residues 92–112 (WPFLLFVLGWITFLSVGYALT). In terms of domain architecture, PNPLA spans 280–471 (LCLSGGATFA…RTDIPIKALN (192 aa)). Residues 311–315 (GTSGG) carry the GXSXG motif. The active-site Nucleophile is Ser313. Catalysis depends on Asp458, which acts as the Proton acceptor. Residues 630 to 659 (SIQPFPFDNGAAGADQKSNDPREERLNRNF) are disordered. Residues 646 to 659 (KSNDPREERLNRNF) are compositionally biased toward basic and acidic residues.

Belongs to the PLPL family.

Its subcellular location is the membrane. Probable lipid hydrolase. The sequence is that of Patatin-like phospholipase domain-containing protein AN0408 from Emericella nidulans (strain FGSC A4 / ATCC 38163 / CBS 112.46 / NRRL 194 / M139) (Aspergillus nidulans).